We begin with the raw amino-acid sequence, 396 residues long: Phosphoglycerate kinase (396 aa).

Substrate-binding positions include 21–23 (DLN), Arg-36, 59–62 (HFGR), Arg-118, and Arg-151. ATP-binding positions include Lys-201, Glu-323, and 353–356 (GGDT).

This sequence belongs to the phosphoglycerate kinase family. Monomer.

It is found in the cytoplasm. It catalyses the reaction (2R)-3-phosphoglycerate + ATP = (2R)-3-phospho-glyceroyl phosphate + ADP. It participates in carbohydrate degradation; glycolysis; pyruvate from D-glyceraldehyde 3-phosphate: step 2/5. The protein is Phosphoglycerate kinase of Brucella abortus biovar 1 (strain 9-941).